The chain runs to 155 residues: UPF0260 protein NGR_c07710 (155 aa).

The protein belongs to the UPF0260 family.

The protein is UPF0260 protein NGR_c07710 of Sinorhizobium fredii (strain NBRC 101917 / NGR234).